Here is a 467-residue protein sequence, read N- to C-terminus: Interleukin-6 receptor subunit alpha (467 aa).

Residues Met-1 to Ala-19 form the signal peptide. The 93-residue stretch at Leu-20–Ala-112 folds into the Ig-like C2-type domain. Residues Leu-20–Pro-365 are Extracellular-facing. 4 disulfides stabilise this stretch: Cys-25/Cys-193, Cys-47/Cys-96, Cys-121/Cys-132, and Cys-165/Cys-176. N-linked (GlcNAc...) asparagine glycans are attached at residues Asn-55 and Asn-93. Fibronectin type-III domains are found at residues Pro-113–Asp-217 and Pro-218–Thr-316. Asn-221 and Asn-245 each carry an N-linked (GlcNAc...) asparagine glycan. The short motif at Trp-303–Ser-307 is the WSXWS motif element. Residues Trp-315–Gln-357 are disordered. Polar residues-rich tracts occupy residues Glu-317–Thr-336 and Lys-346–Gln-357. Asn-350 carries N-linked (GlcNAc...) asparagine glycosylation. Thr-352 carries an O-linked (GlcNAc) threonine glycan. The helical transmembrane segment at Thr-366–Leu-386 threads the bilayer. The Cytoplasmic portion of the chain corresponds to Arg-387–Arg-467. The segment at Ile-428–Arg-467 is disordered.

The protein belongs to the type I cytokine receptor family. Type 3 subfamily. In terms of assembly, component of a hexamer of two molecules each of IL6, IL6R and IL6ST; first binds to IL6 to associate with the signaling subunit IL6ST. Interacts (via N-terminal ectodomain) with SORL1; this interaction may affect IL6-binding to IL6R, hence decrease IL6 'classic-signaling'. Also interacts with SORL1; this interaction leads to soluble IL6R internalization. May form a trimeric complex with the soluble SORL1 ectodomain and circulating IL6 receptor; this interaction might stabilize circulating IL6, hence promote IL6 'trans-signaling'. A short soluble form is also released from the membrane by proteolysis. The sIL6R is formed by limited proteolysis of membrane-bound receptors, a process referred to as ectodomain shedding. mIL6R is cleaved by the proteases ADAM10 and ADAM17. Post-translationally, glycosylated. Glycosylation is dispensable for transport, signaling, and cell-surface turnover. Glycosylation at Asn-55 is a protease-regulatory exosite. Glycosylation is required for ADAM17-mediated proteolysis. Expressed in liver.

The protein resides in the cell membrane. It is found in the secreted. Its activity is regulated as follows. Classic and trans-signaling are both inhibited by tocilizumab, a humanized monoclonal antibody that blocks interleukin IL6R signaling. Part of the receptor for interleukin 6. Binds to IL6 with low affinity, but does not transduce a signal. Signal activation necessitate an association with IL6ST. Activation leads to the regulation of the immune response, acute-phase reactions and hematopoiesis. The interaction with membrane-bound IL6R and IL6ST stimulates 'classic signaling', the restricted expression of the IL6R limits classic IL6 signaling to only a few tissues such as the liver and some cells of the immune system. Whereas the binding of IL6 and soluble IL6R to IL6ST stimulates 'trans-signaling'. Alternatively, 'cluster signaling' occurs when membrane-bound IL6:IL6R complexes on transmitter cells activate IL6ST receptors on neighboring receiver cells. Its function is as follows. Signaling via the membrane-bound IL6R is mostly regenerative and anti-inflammatory. Drives naive CD4(+) T cells to the Th17 lineage, through 'cluster signaling' by dendritic cells. In terms of biological role, soluble form of IL6 receptor (sIL6R) that acts as an agonist of IL6 activity. The IL6:sIL6R complex (hyper-IL6) binds to IL6ST/gp130 on cell surfaces and induces signaling also on cells that do not express membrane-bound IL6R in a process called IL6 'trans-signaling'. sIL6R is causative for the pro-inflammatory properties of IL6 and an important player in the development of chronic inflammatory diseases. In complex with IL6, is required for induction of VEGF production. Plays a protective role during liver injury, being required for maintenance of tissue regeneration. 'Trans-signaling' in central nervous system regulates energy and glucose homeostasis. The protein is Interleukin-6 receptor subunit alpha (IL6R) of Sus scrofa (Pig).